The chain runs to 605 residues: Membrane protein insertase YidC (605 aa).

A helical transmembrane segment spans residues 8–28 (MIIAIALSLAVLLGWNYFVAA). The span at 35 to 47 (RQQQAQTSASPSP) shows a compositional bias: low complexity. Positions 35-71 (RQQQAQTSASPSPKEGGPSAPVPGTLPGASGGNPQAA) are disordered. The next 4 membrane-spanning stretches (helical) occupy residues 377–397 (LFGN…LFFL), 451–471 (WPVV…FVTI), 496–516 (LFGL…WPIV), and 540–560 (FTFM…GLVI).

This sequence belongs to the OXA1/ALB3/YidC family. Type 1 subfamily. Interacts with the Sec translocase complex via SecD. Specifically interacts with transmembrane segments of nascent integral membrane proteins during membrane integration.

It is found in the cell inner membrane. Its function is as follows. Required for the insertion and/or proper folding and/or complex formation of integral membrane proteins into the membrane. Involved in integration of membrane proteins that insert both dependently and independently of the Sec translocase complex, as well as at least some lipoproteins. Aids folding of multispanning membrane proteins. This is Membrane protein insertase YidC from Methylobacterium nodulans (strain LMG 21967 / CNCM I-2342 / ORS 2060).